The following is a 472-amino-acid chain: 3-isopropylmalate dehydratase large subunit (472 aa).

Residues 289-312 (TWGTNPAQGTGVSQVVPSPDDAKD) form a disordered region. Positions 290–304 (WGTNPAQGTGVSQVV) are enriched in polar residues. Residues cysteine 347, cysteine 407, and cysteine 410 each coordinate [4Fe-4S] cluster.

The protein belongs to the aconitase/IPM isomerase family. LeuC type 1 subfamily. In terms of assembly, heterodimer of LeuC and LeuD. It depends on [4Fe-4S] cluster as a cofactor.

It catalyses the reaction (2R,3S)-3-isopropylmalate = (2S)-2-isopropylmalate. Its pathway is amino-acid biosynthesis; L-leucine biosynthesis; L-leucine from 3-methyl-2-oxobutanoate: step 2/4. Functionally, catalyzes the isomerization between 2-isopropylmalate and 3-isopropylmalate, via the formation of 2-isopropylmaleate. This Halalkalibacterium halodurans (strain ATCC BAA-125 / DSM 18197 / FERM 7344 / JCM 9153 / C-125) (Bacillus halodurans) protein is 3-isopropylmalate dehydratase large subunit.